Reading from the N-terminus, the 322-residue chain is Nucleoprotein (322 aa).

RNA contacts are provided by tyrosine 43, tyrosine 46, valine 76, arginine 122, lysine 240, and serine 269.

It belongs to the tenuiviruses nucleocapsid protein family.

Its subcellular location is the virion. The protein localises to the host cytoplasm. In terms of biological role, encapsidates the genome, protecting it from nucleases. The encapsidated genomic RNA is termed the nucleocapsid (NC), and serves as template for viral transcription and replication. The protein is Nucleoprotein of Avena sativa (Oat).